A 348-amino-acid chain; its full sequence is Probable malate dehydrogenase 2, mitochondrial (348 aa).

The N-terminal 9 residues, methionine 1–phenylalanine 9, are a transit peptide targeting the mitochondrion. NAD(+) is bound at residue glycine 31–glycine 37. Substrate is bound by residues arginine 112 and arginine 118. NAD(+) contacts are provided by residues asparagine 125, glutamine 132, and valine 150 to asparagine 152. Residues asparagine 152 and arginine 183 each coordinate substrate. The Proton acceptor role is filled by histidine 208.

The protein belongs to the LDH/MDH superfamily. MDH type 2 family. In terms of assembly, homodimer.

It localises to the mitochondrion. The catalysed reaction is (S)-malate + NAD(+) = oxaloacetate + NADH + H(+). Its function is as follows. Catalyzes the reversible oxidation of malate to oxaloacetate. The protein is Probable malate dehydrogenase 2, mitochondrial (mdhB) of Dictyostelium discoideum (Social amoeba).